We begin with the raw amino-acid sequence, 177 residues long: MSRVAKAPVSIPAGVEVTLNEQTLTVKGAKGSLTRVINNAVNVVIEDGVVKFLPVEGVVNAWAQAGTTRALVNNMVVGVSQGFERKLKLVGVGYRAKLVGADIDLTLGFSHPLVHKLPAGVTAECPSQTDIVLRGVDKQLIGQVAAEIRGYRPPEPYKGKGVRYDDEEVRRKEAKKK.

Residues Arg-152–Arg-171 are compositionally biased toward basic and acidic residues. The tract at residues Arg-152 to Lys-177 is disordered.

The protein belongs to the universal ribosomal protein uL6 family. Part of the 50S ribosomal subunit.

In terms of biological role, this protein binds to the 23S rRNA, and is important in its secondary structure. It is located near the subunit interface in the base of the L7/L12 stalk, and near the tRNA binding site of the peptidyltransferase center. The protein is Large ribosomal subunit protein uL6 of Shewanella putrefaciens (strain CN-32 / ATCC BAA-453).